Reading from the N-terminus, the 249-residue chain is ATP-dependent dethiobiotin synthetase BioD (249 aa).

11–16 (NVGKTI) contributes to the ATP binding site. Threonine 15 is a binding site for Mg(2+). The active site involves lysine 31. Threonine 35 serves as a coordination point for substrate. Residues aspartate 40, 127–130 (EGAG), 188–189 (NS), and 215–217 (PYL) contribute to the ATP site. The Mg(2+) site is built by aspartate 40 and glutamate 127.

This sequence belongs to the dethiobiotin synthetase family. As to quaternary structure, homodimer. Mg(2+) serves as cofactor.

It localises to the cytoplasm. It carries out the reaction (7R,8S)-7,8-diammoniononanoate + CO2 + ATP = (4R,5S)-dethiobiotin + ADP + phosphate + 3 H(+). The protein operates within cofactor biosynthesis; biotin biosynthesis; biotin from 7,8-diaminononanoate: step 1/2. In terms of biological role, catalyzes a mechanistically unusual reaction, the ATP-dependent insertion of CO2 between the N7 and N8 nitrogen atoms of 7,8-diaminopelargonic acid (DAPA, also called 7,8-diammoniononanoate) to form a ureido ring. The sequence is that of ATP-dependent dethiobiotin synthetase BioD from Neorickettsia sennetsu (strain ATCC VR-367 / Miyayama) (Ehrlichia sennetsu).